The chain runs to 427 residues: 3-phosphoshikimate 1-carboxyvinyltransferase (427 aa).

The 3-phosphoshikimate site is built by lysine 22, serine 23, and arginine 27. Lysine 22 is a phosphoenolpyruvate binding site. Residues glycine 96 and arginine 124 each contribute to the phosphoenolpyruvate site. Residues serine 169, serine 170, glutamine 171, serine 197, aspartate 313, asparagine 336, and lysine 340 each contribute to the 3-phosphoshikimate site. Glutamine 171 is a binding site for phosphoenolpyruvate. Aspartate 313 (proton acceptor) is an active-site residue. Residues arginine 344, arginine 386, and lysine 411 each coordinate phosphoenolpyruvate.

It belongs to the EPSP synthase family. Monomer.

The protein resides in the cytoplasm. The catalysed reaction is 3-phosphoshikimate + phosphoenolpyruvate = 5-O-(1-carboxyvinyl)-3-phosphoshikimate + phosphate. It functions in the pathway metabolic intermediate biosynthesis; chorismate biosynthesis; chorismate from D-erythrose 4-phosphate and phosphoenolpyruvate: step 6/7. Its function is as follows. Catalyzes the transfer of the enolpyruvyl moiety of phosphoenolpyruvate (PEP) to the 5-hydroxyl of shikimate-3-phosphate (S3P) to produce enolpyruvyl shikimate-3-phosphate and inorganic phosphate. The chain is 3-phosphoshikimate 1-carboxyvinyltransferase from Salmonella dublin (strain CT_02021853).